A 181-amino-acid polypeptide reads, in one-letter code: Adenine phosphoribosyltransferase (181 aa).

The protein belongs to the purine/pyrimidine phosphoribosyltransferase family. In terms of assembly, homodimer.

The protein resides in the cytoplasm. It carries out the reaction AMP + diphosphate = 5-phospho-alpha-D-ribose 1-diphosphate + adenine. Its pathway is purine metabolism; AMP biosynthesis via salvage pathway; AMP from adenine: step 1/1. In terms of biological role, catalyzes a salvage reaction resulting in the formation of AMP, that is energically less costly than de novo synthesis. This Shewanella loihica (strain ATCC BAA-1088 / PV-4) protein is Adenine phosphoribosyltransferase.